The following is a 440-amino-acid chain: Beta-1,3-galactosyl-O-glycosyl-glycoprotein beta-1,6-N-acetylglucosaminyltransferase 3 (440 aa).

At 1 to 12 (MKMTGWKKKLCR) the chain is on the cytoplasmic side. Residues 13-30 (GHHLWALGCYMLLAVVAL) form a helical; Signal-anchor for type II membrane protein membrane-spanning segment. At 31–440 (RLSLRLKCDV…RHKAIYGTEL (410 aa)) the chain is on the lumenal side. Asn72 and Asn108 each carry an N-linked (GlcNAc...) asparagine glycan. Cystine bridges form between Cys73-Cys230, Cys164-Cys384, Cys185-Cys212, and Cys393-Cys425.

It belongs to the glycosyltransferase 14 family. In terms of processing, N-glycosylated. Primarily expressed in mucus-secreting tissues.

The protein localises to the golgi apparatus membrane. It carries out the reaction a 3-O-[beta-D-galactosyl-(1-&gt;3)-N-acetyl-alpha-D-galactosaminyl]-L-seryl-[protein] + UDP-N-acetyl-alpha-D-glucosamine = 3-O-{beta-D-galactosyl-(1-&gt;3)-[N-acetyl-beta-D-glucosaminyl-(1-&gt;6)]-N-acetyl-alpha-D-galactosaminyl}-L-seryl-[protein] + UDP + H(+). It catalyses the reaction a 3-O-[beta-D-galactosyl-(1-&gt;3)-N-acetyl-alpha-D-galactosaminyl]-L-threonyl-[protein] + UDP-N-acetyl-alpha-D-glucosamine = a 3-O-{beta-D-galactosyl-(1-&gt;3)-[N-acetyl-beta-D-glucosaminyl-(1-&gt;6)]-N-acetyl-alpha-D-galactosaminyl}-L-threonyl-[protein] + UDP + H(+). The catalysed reaction is a beta-D-Gal-(1-&gt;4)-beta-D-GlcNAc-(1-&gt;3)-beta-D-Gal-(1-&gt;4)-beta-D-GlcNAc derivative + UDP-N-acetyl-alpha-D-glucosamine = a beta-D-Gal-(1-&gt;4)-beta-D-GlcNAc-(1-&gt;3)-[beta-D-GlcNAc-(1-&gt;6)]-beta-D-Gal-(1-&gt;4)-N-acetyl-beta-D-glucosaminyl derivative + UDP + H(+). The enzyme catalyses 3-O-[N-acetyl-beta-D-glucosaminyl-(1-&gt;3)-N-acetyl-alpha-D-galactosaminyl]-L-seryl-[protein] + UDP-N-acetyl-alpha-D-glucosamine = 3-O-[N-acetyl-beta-D-glucosaminyl-(1-&gt;3)-[N-acetyl-beta-D-glucosaminyl-(1-&gt;6)]-N-acetyl-alpha-D-galactosaminyl]-L-seryl-[protein] + UDP + H(+). It carries out the reaction a 3-O-[N-acetyl-beta-D-glucosaminyl-(1-&gt;3)-N-acetyl-alpha-D-galactosaminyl]-L-threonyl-[protein] + UDP-N-acetyl-alpha-D-glucosamine = 3-O-[N-acetyl-beta-D-glucosaminyl-(1-&gt;3)-[N-acetyl-beta-D-glucosaminyl-(1-&gt;6)]-N-acetyl-alpha-D-galactosaminyl]-L-threonyl-[protein] + UDP + H(+). Its pathway is protein modification; protein glycosylation. In terms of biological role, glycosyltransferase that can synthesize all known mucin beta 6 N-acetylglucosaminides. Mediates core 2 and core 4 O-glycan branching, 2 important steps in mucin-type biosynthesis. Also has I-branching enzyme activity by converting linear into branched poly-N-acetyllactosaminoglycans, leading to introduce the blood group I antigen during embryonic development. This chain is Beta-1,3-galactosyl-O-glycosyl-glycoprotein beta-1,6-N-acetylglucosaminyltransferase 3 (GCNT3), found in Bos taurus (Bovine).